The following is a 716-amino-acid chain: Epidermal growth factor receptor kinase substrate 8-like protein 2 (716 aa).

Disordered regions lie at residues 1-25 and 182-243; these read MSQS…DGVA and PQTL…SQEE. The PID domain maps to 46–202; sequence MHETSQYHVQ…RQRQSILPPP (157 aa). The segment covering 199–208 has biased composition (pro residues); that stretch reads LPPPQGPAPI. The segment covering 234-243 has biased composition (basic and acidic residues); sequence GFRRRESQEE. A Phosphoserine modification is found at Ser-240. Thr-304 is modified (phosphothreonine). The tract at residues 449–488 is disordered; it reads VSPVSRQSIRNSQKHSPTSEPTPPGDALPPVSSPHTHRGY. Ser-450 carries the post-translational modification Phosphoserine. Over residues 452 to 467 the composition is skewed to polar residues; the sequence is VSRQSIRNSQKHSPTS. A Phosphothreonine modification is found at Thr-470. An SH3 domain is found at 493–552; sequence AMAKYVKILYDFTARNANELSVLKDEVLEVLEDGRQWWKLRSRSGQAGYVPCNILGEARP. Ser-571 carries the phosphoserine modification.

The protein belongs to the EPS8 family. Interacts with ABI1. Part of a complex that contains SOS1, ABI1 and EPS8L2. Associates with F-actin.

It localises to the cytoplasm. Its subcellular location is the cell projection. The protein resides in the stereocilium. Stimulates guanine exchange activity of SOS1. May play a role in membrane ruffling and remodeling of the actin cytoskeleton. In the cochlea, is required for stereocilia maintenance in adult hair cells. The protein is Epidermal growth factor receptor kinase substrate 8-like protein 2 (EPS8L2) of Pongo abelii (Sumatran orangutan).